Here is a 495-residue protein sequence, read N- to C-terminus: Lysine--tRNA ligase (495 aa).

2 residues coordinate Mg(2+): E406 and E413.

It belongs to the class-II aminoacyl-tRNA synthetase family. As to quaternary structure, homodimer. Mg(2+) is required as a cofactor.

It localises to the cytoplasm. It carries out the reaction tRNA(Lys) + L-lysine + ATP = L-lysyl-tRNA(Lys) + AMP + diphosphate. This chain is Lysine--tRNA ligase (lysS), found in Staphylococcus aureus.